Consider the following 255-residue polypeptide: Isoprenyl transferase (255 aa).

Residue Asp-35 is part of the active site. Asp-35 provides a ligand contact to Mg(2+). Residues 36–39, Trp-40, Arg-48, His-52, and 80–82 each bind substrate; these read GNGR and STE. The active-site Proton acceptor is Asn-83. Residues Trp-84, Arg-86, Arg-203, and 209–211 each bind substrate; that span reads RIS. Glu-222 contributes to the Mg(2+) binding site.

The protein belongs to the UPP synthase family. In terms of assembly, homodimer. Mg(2+) serves as cofactor.

Functionally, catalyzes the condensation of isopentenyl diphosphate (IPP) with allylic pyrophosphates generating different type of terpenoids. The sequence is that of Isoprenyl transferase from Clostridium tetani (strain Massachusetts / E88).